Consider the following 442-residue polypeptide: MRLATDPAGSSSGLPQPRRVAVLSVHTSPLAQPGTGDAGGMNVYVLQTSLELARRGVEVEIFTRATSSADQPIVSVAPGVVVRNVVAGPFEGLDKNDLPTQLCAFTAGVLRAEATHEPGYYDILHSHYWLSGQVGWLAADRWAVPLVHTAHTLAAVKNASLAAGDTPEPPMRAIGEQQVVDEADRLIVNTEHEAQQLVSLHHADPGRIDVVHPGVDLATFTPGDRAAARAALGLDPAARIVAFVGRIQPLKAPDVLLRAAALLPDVHVVIAGGPSGSGMATPDNLVHLAGELGIAERVTFLPPQSRDHLVRVYRAADIVAVPSHNESFGLVAVEAQACGTPVVAAAVGGLPVAVRDGVSGALVHSHEPDAWATTLGEVFAADPSTFGRAAVDHAATFSWAHTVDALLTGYGRAIADHRADNTLQVAARRSGRRFSMRRGVRA.

1D-myo-inositol 3-phosphate is bound at residue His26. Residues 32–33 (QP) and Gly40 contribute to the UDP-N-acetyl-alpha-D-glucosamine site. Residues 37–42 (DAGGMN), Lys95, Tyr128, Thr152, and Arg172 each bind 1D-myo-inositol 3-phosphate. The UDP-N-acetyl-alpha-D-glucosamine site is built by Arg246, Lys251, and Gln304. Mg(2+) contacts are provided by Tyr313, Arg314, and Ala316. 2 residues coordinate UDP-N-acetyl-alpha-D-glucosamine: Glu326 and Glu334. A Mg(2+)-binding site is contributed by Thr340.

This sequence belongs to the glycosyltransferase group 1 family. MshA subfamily. In terms of assembly, homodimer.

It carries out the reaction 1D-myo-inositol 3-phosphate + UDP-N-acetyl-alpha-D-glucosamine = 1D-myo-inositol 2-acetamido-2-deoxy-alpha-D-glucopyranoside 3-phosphate + UDP + H(+). Functionally, catalyzes the transfer of a N-acetyl-glucosamine moiety to 1D-myo-inositol 3-phosphate to produce 1D-myo-inositol 2-acetamido-2-deoxy-glucopyranoside 3-phosphate in the mycothiol biosynthesis pathway. This is D-inositol 3-phosphate glycosyltransferase from Mycolicibacterium gilvum (strain PYR-GCK) (Mycobacterium gilvum (strain PYR-GCK)).